Consider the following 473-residue polypeptide: Siroheme synthase (473 aa).

A precorrin-2 dehydrogenase /sirohydrochlorin ferrochelatase region spans residues 1–203; sequence MNYLPIFIDL…GNKEQAINVL (203 aa). Residues 22-23 and 43-44 contribute to the NAD(+) site; these read EV and KE. The residue at position 128 (serine 128) is a Phosphoserine. The segment at 215–473 is uroporphyrinogen-III C-methyltransferase; it reads GEIILVGAGP…KNKFSTLTFI (259 aa). Position 224 (proline 224) interacts with S-adenosyl-L-methionine. Catalysis depends on aspartate 247, which acts as the Proton acceptor. Lysine 269 functions as the Proton donor in the catalytic mechanism. Residues 300–302, isoleucine 305, methionine 382, and glycine 411 contribute to the S-adenosyl-L-methionine site; that span reads GGD.

It in the N-terminal section; belongs to the precorrin-2 dehydrogenase / sirohydrochlorin ferrochelatase family. In the C-terminal section; belongs to the precorrin methyltransferase family.

It carries out the reaction uroporphyrinogen III + 2 S-adenosyl-L-methionine = precorrin-2 + 2 S-adenosyl-L-homocysteine + H(+). The catalysed reaction is precorrin-2 + NAD(+) = sirohydrochlorin + NADH + 2 H(+). It catalyses the reaction siroheme + 2 H(+) = sirohydrochlorin + Fe(2+). Its pathway is cofactor biosynthesis; adenosylcobalamin biosynthesis; precorrin-2 from uroporphyrinogen III: step 1/1. It participates in cofactor biosynthesis; adenosylcobalamin biosynthesis; sirohydrochlorin from precorrin-2: step 1/1. It functions in the pathway porphyrin-containing compound metabolism; siroheme biosynthesis; precorrin-2 from uroporphyrinogen III: step 1/1. The protein operates within porphyrin-containing compound metabolism; siroheme biosynthesis; siroheme from sirohydrochlorin: step 1/1. Its pathway is porphyrin-containing compound metabolism; siroheme biosynthesis; sirohydrochlorin from precorrin-2: step 1/1. Multifunctional enzyme that catalyzes the SAM-dependent methylations of uroporphyrinogen III at position C-2 and C-7 to form precorrin-2 via precorrin-1. Then it catalyzes the NAD-dependent ring dehydrogenation of precorrin-2 to yield sirohydrochlorin. Finally, it catalyzes the ferrochelation of sirohydrochlorin to yield siroheme. The protein is Siroheme synthase of Buchnera aphidicola subsp. Acyrthosiphon pisum (strain APS) (Acyrthosiphon pisum symbiotic bacterium).